Consider the following 177-residue polypeptide: Large ribosomal subunit protein uL6 (177 aa).

Over residues 152–171 the composition is skewed to basic and acidic residues; sequence RPPEPYKGKGVRYDDEEVRR. A disordered region spans residues 152–177; it reads RPPEPYKGKGVRYDDEEVRRKEAKKK.

Belongs to the universal ribosomal protein uL6 family. As to quaternary structure, part of the 50S ribosomal subunit.

Functionally, this protein binds to the 23S rRNA, and is important in its secondary structure. It is located near the subunit interface in the base of the L7/L12 stalk, and near the tRNA binding site of the peptidyltransferase center. The chain is Large ribosomal subunit protein uL6 from Shewanella oneidensis (strain ATCC 700550 / JCM 31522 / CIP 106686 / LMG 19005 / NCIMB 14063 / MR-1).